Consider the following 448-residue polypeptide: C4-dicarboxylate transport protein (448 aa).

8 helical membrane passes run leucine 20–tyrosine 38, isoleucine 53–methionine 75, alanine 88–valine 110, isoleucine 161–valine 178, leucine 199–glycine 220, leucine 230–valine 252, leucine 325–alanine 347, and phenylalanine 362–leucine 384.

Belongs to the dicarboxylate/amino acid:cation symporter (DAACS) (TC 2.A.23) family.

The protein resides in the cell inner membrane. In terms of biological role, responsible for the transport of dicarboxylates such as succinate, fumarate, and malate from the periplasm across the membrane. The polypeptide is C4-dicarboxylate transport protein (Agrobacterium fabrum (strain C58 / ATCC 33970) (Agrobacterium tumefaciens (strain C58))).